Consider the following 146-residue polypeptide: 6-carboxy-5,6,7,8-tetrahydropterin synthase (146 aa).

H27 provides a ligand contact to Zn(2+). C37 functions as the Proton acceptor in the catalytic mechanism. H41 and H43 together coordinate Zn(2+). Active-site charge relay system residues include H78 and E129.

This sequence belongs to the PTPS family. QueD subfamily. Homotetramer. Zn(2+) is required as a cofactor.

The enzyme catalyses 7,8-dihydroneopterin 3'-triphosphate + H2O = 6-carboxy-5,6,7,8-tetrahydropterin + triphosphate + acetaldehyde + 2 H(+). Its pathway is purine metabolism; 7-cyano-7-deazaguanine biosynthesis. Catalyzes the conversion of 7,8-dihydroneopterin triphosphate (H2NTP) to 6-carboxy-5,6,7,8-tetrahydropterin (CPH4) and acetaldehyde. This Bacillus subtilis (strain 168) protein is 6-carboxy-5,6,7,8-tetrahydropterin synthase (queD).